Here is a 282-residue protein sequence, read N- to C-terminus: Trihydroxynaphthalene reductase PfmaI (282 aa).

NADP(+)-binding residues include I41, N114, and R147. Residues S164 and Y178 each act as proton donor in the active site. Residues Y178, K182, I211, and T213 each contribute to the NADP(+) site. K182 acts as the Lowers pKa of active site Tyr in catalysis.

This sequence belongs to the short-chain dehydrogenases/reductases (SDR) family.

It participates in pigment biosynthesis; melanin biosynthesis. Its function is as follows. Trihydroxynaphthalene reductase involved the biosynthesis of dihydroxynaphthalene (DHN)-melanin, a bluish-green pigment forming a dark layer in the conidial wall that protects the conidia from UV radiations. The first step of the pathway is the production of the pentaketide 1,3,6,8-tetrahydroxynaphthalene (1,3,6,8-THN or T4HN) by the polyketide synthase PfmaE though condensation of acetyl-CoA with malonyl-CoA. T4HN is not stable and easily oxidizes into the stable form flaviolin. T4HN is also substrate of the hydroxynaphthalene reductase PfmaG to yield scytalone. The scytalone dehydratase PfmaJ then reduces scytalone to 1,3,8-THN. 1,3,8-THN is then substrate of the hydroxynaphthalene reductase PfmaI to yield vermelone. Vermelone is further converted by the multicopper oxidase PfmaD to 1,8-DHN. Finally the laccase PFICI_06862 transforms 1,8-DHN to DHN-melanin. The roles of the 5-oxoprolinase PfmaA and the proline iminopeptidase PfmaB within the cluster have not been elucidated yet. In Pestalotiopsis fici (strain W106-1 / CGMCC3.15140), this protein is Trihydroxynaphthalene reductase PfmaI.